The sequence spans 952 residues: Serine/threonine-protein kinase atg1 (952 aa).

The Protein kinase domain occupies 23–329; sequence FTINEQIGKG…FPEYFAHPVV (307 aa). ATP is bound by residues 29–37 and lysine 52; that span reads IGKGSFATV. Aspartate 166 serves as the catalytic Proton acceptor. 4 disordered regions span residues 331–478, 510–573, 783–806, and 920–952; these read EPIP…EAEQ, GRAN…SSPS, RLPEDHPGHPNNRSTASRLVGGSS, and AIAKHQSMPPPSSSPRRSYSGGTTPTINNTPPK. Basic and acidic residues-rich tracts occupy residues 338-347 and 356-372; these read GDDRPKEKSP and SLRDRQRESPTVKHIDT. Residues 386-398 show a composition bias toward polar residues; sequence SPRTPNIESNQPF. The segment covering 429–439 has biased composition (basic and acidic residues); the sequence is PRQRDRKDRTE. 3 stretches are compositionally biased toward polar residues: residues 459-475, 553-573, and 793-806; these read ANLQPKNEVQSSNSITE, PDTSSARNSYGSYGKTGSSPS, and NNRSTASRLVGGSS. A compositionally biased stretch (low complexity) spans 933 to 952; the sequence is SPRRSYSGGTTPTINNTPPK.

This sequence belongs to the protein kinase superfamily. Ser/Thr protein kinase family. APG1/unc-51/ULK1 subfamily. As to quaternary structure, homodimer. Forms a ternary complex with ATG13 and ATG17.

The protein localises to the cytoplasm. It localises to the preautophagosomal structure membrane. It carries out the reaction L-seryl-[protein] + ATP = O-phospho-L-seryl-[protein] + ADP + H(+). It catalyses the reaction L-threonyl-[protein] + ATP = O-phospho-L-threonyl-[protein] + ADP + H(+). Its function is as follows. Serine/threonine protein kinase involved in the cytoplasm to vacuole transport (Cvt) and found to be essential in autophagy, where it is required for the formation of autophagosomes. Involved in the clearance of protein aggregates which cannot be efficiently cleared by the proteasome. Required for selective autophagic degradation of the nucleus (nucleophagy) as well as for mitophagy which contributes to regulate mitochondrial quantity and quality by eliminating the mitochondria to a basal level to fulfill cellular energy requirements and preventing excess ROS production. Also involved in endoplasmic reticulum-specific autophagic process, in selective removal of ER-associated degradation (ERAD) substrates. Plays a key role in ATG9 and ATG23 cycling through the pre-autophagosomal structure and is necessary to promote ATG18 binding to ATG9 through phosphorylation of ATG9. Catalyzes phosphorylation of ATG4, decreasing the interaction between ATG4 and ATG8 and impairing deconjugation of PE-conjugated forms of ATG8. This chain is Serine/threonine-protein kinase atg1, found in Botryotinia fuckeliana (strain B05.10) (Noble rot fungus).